The sequence spans 504 residues: Ribose import ATP-binding protein RbsA 3 (504 aa).

2 consecutive ABC transporter domains span residues 6–238 (ANLK…VGRP) and 251–494 (IGAE…MMGG). Residue 38–45 (GENGAGKS) coordinates ATP.

It belongs to the ABC transporter superfamily. Ribose importer (TC 3.A.1.2.1) family. The complex is composed of an ATP-binding protein (RbsA), two transmembrane proteins (RbsC) and a solute-binding protein (RbsB).

It localises to the cell inner membrane. The catalysed reaction is D-ribose(out) + ATP + H2O = D-ribose(in) + ADP + phosphate + H(+). Part of the ABC transporter complex RbsABC involved in ribose import. Responsible for energy coupling to the transport system. This Rhizobium meliloti (strain 1021) (Ensifer meliloti) protein is Ribose import ATP-binding protein RbsA 3.